A 192-amino-acid chain; its full sequence is Protein FAM169BP (192 aa).

Residues Tyr-121–Pro-192 form a disordered region. Acidic residues predominate over residues Glu-159–Ala-177.

This sequence belongs to the FAM169 family.

The polypeptide is Protein FAM169BP (Homo sapiens (Human)).